Consider the following 442-residue polypeptide: MSFLWSFASFIIVISVLVAVHEYGHFWAARKCGIQVHRFSIGFGKVLWSRTDKQGTEFVISAIPLGGYVKMLDGRNEVVPPELSSRAFDQKSVLQRAFVIAAGPIANFLFAILAYFTIYTVGIPTVKPVIADISSNSIAAQAQIEPNTQIMAVDGTKVSDWETINMLLATKMGNDEIHLTLSPFGSSIEQHKVLNTKDWRFDPEKESAMSSLGLQPVRTKVDMILSKVEVNSPADKAGLKAGDRIYAGEQLISWQQFVQFVQEGKPFNVKVERDGQFSFVVLTPELNKKGRWYVGIAPTAAPISDIYRTELKYGILEALQKGVEKTIQLSWLTIKVIGKLFTGDLALKNLGGPISIAKGAGISSEIGLIYYLGFMALISVNLGIMNLFPLPVLDGGHLVFLAAEAVRGKPLSERIQNLSYRIGAAILMALMGFALFNDFLRL.

A Zn(2+)-binding site is contributed by His21. The active site involves Glu22. Position 25 (His25) interacts with Zn(2+). A helical transmembrane segment spans residues 97-119; sequence AFVIAAGPIANFLFAILAYFTIY. A PDZ domain is found at 198 to 286; the sequence is DWRFDPEKES…FSFVVLTPEL (89 aa). A run of 2 helical transmembrane segments spans residues 366 to 388 and 418 to 440; these read IGLI…MNLF and LSYR…NDFL.

The protein belongs to the peptidase M50B family. The cofactor is Zn(2+).

Its subcellular location is the cell inner membrane. The protein is Putative zinc metalloprotease PM1991 of Pasteurella multocida (strain Pm70).